Consider the following 519-residue polypeptide: MGLATAPLGWTYVAWFGQIPLWIWIFRANTTRLNFTQLKQFLISRSLTAIAWGGGFYGVALFWITGVHPLTWLGVPWLASLAIAAFCWLAITAWGVVLVFVWLLAMAVWEVTTARTKVNSTFKKYLFILWGTASWCGLETLWSHSILWWSPVAYTQSPSQLHFLQWGAIGGPALLSAFIVAVNGFLALGLIDFLDGKTVNKNKQNWHYFLIAILIWLFCQGGGWLLYQKPLADTPEEKINVGIIQGNIPNQIKFNSEGWQRAIAGYTEGYKKLTEQGAEIVLTPEGALPYLWETVVAKSGFYQAILQTQVPVWLGAYGTKGDGYTNSLLTVDGQGKLLGRYDKFKLVPLGEYIPLSNVFGQLIQRLSPLKEQLLPGDRPQVLPTPFGPAAVVICYESAFPDLLRSQLLQGGEFILSSANNAHYSDTMAAQHHALDVMRAIEGDRWLARATNTGLSAIINPRGKTLWLSAMNQYEIHAAPIYRRRGLILYSRWGDWVVFLLLVVSAIAWLYQIVFPLNQR.

The next 6 membrane-spanning stretches (helical) occupy residues 6–26, 47–67, 83–103, 126–146, 174–194, and 206–226; these read APLGWTYVAWFGQIPLWIWIF, LTAIAWGGGFYGVALFWITGV, IAAFCWLAITAWGVVLVFVWL, LFILWGTASWCGLETLWSHSI, LLSAFIVAVNGFLALGLIDFL, and WHYFLIAILIWLFCQGGGWLL. Positions 244-482 constitute a CN hydrolase domain; sequence IQGNIPNQIK…YEIHAAPIYR (239 aa). The active-site Proton acceptor is Glu285. Lys343 is a catalytic residue. Cys394 (nucleophile) is an active-site residue. The chain crosses the membrane as a helical span at residues 496 to 516; it reads VVFLLLVVSAIAWLYQIVFPL.

Belongs to the CN hydrolase family. Apolipoprotein N-acyltransferase subfamily.

Its subcellular location is the cell inner membrane. The catalysed reaction is N-terminal S-1,2-diacyl-sn-glyceryl-L-cysteinyl-[lipoprotein] + a glycerophospholipid = N-acyl-S-1,2-diacyl-sn-glyceryl-L-cysteinyl-[lipoprotein] + a 2-acyl-sn-glycero-3-phospholipid + H(+). Its pathway is protein modification; lipoprotein biosynthesis (N-acyl transfer). Functionally, catalyzes the phospholipid dependent N-acylation of the N-terminal cysteine of apolipoprotein, the last step in lipoprotein maturation. In Synechocystis sp. (strain ATCC 27184 / PCC 6803 / Kazusa), this protein is Apolipoprotein N-acyltransferase.